The chain runs to 267 residues: Hydroxyethylthiazole kinase (267 aa).

A substrate-binding site is contributed by Met49. ATP is bound by residues Arg124 and Thr170. Gly197 contacts substrate.

It belongs to the Thz kinase family. It depends on Mg(2+) as a cofactor.

It catalyses the reaction 5-(2-hydroxyethyl)-4-methylthiazole + ATP = 4-methyl-5-(2-phosphooxyethyl)-thiazole + ADP + H(+). It participates in cofactor biosynthesis; thiamine diphosphate biosynthesis; 4-methyl-5-(2-phosphoethyl)-thiazole from 5-(2-hydroxyethyl)-4-methylthiazole: step 1/1. Catalyzes the phosphorylation of the hydroxyl group of 4-methyl-5-beta-hydroxyethylthiazole (THZ). This chain is Hydroxyethylthiazole kinase, found in Tolumonas auensis (strain DSM 9187 / NBRC 110442 / TA 4).